Reading from the N-terminus, the 408-residue chain is Aminomethyltransferase, mitochondrial (408 aa).

The transit peptide at Met-1–Phe-30 directs the protein to the mitochondrion. Residues Glu-235, Arg-266, and Tyr-404 each coordinate substrate.

Belongs to the GcvT family. The glycine cleavage system is composed of four proteins: P, T, L and H.

The protein localises to the mitochondrion. It catalyses the reaction N(6)-[(R)-S(8)-aminomethyldihydrolipoyl]-L-lysyl-[protein] + (6S)-5,6,7,8-tetrahydrofolate = N(6)-[(R)-dihydrolipoyl]-L-lysyl-[protein] + (6R)-5,10-methylene-5,6,7,8-tetrahydrofolate + NH4(+). Its function is as follows. The glycine cleavage system catalyzes the degradation of glycine. The chain is Aminomethyltransferase, mitochondrial (GDCST) from Mesembryanthemum crystallinum (Common ice plant).